Reading from the N-terminus, the 1069-residue chain is ISWI chromatin-remodeling complex ATPase CHR17 (1069 aa).

Residues methionine 1–serine 10 show a composition bias toward basic and acidic residues. Disordered regions lie at residues methionine 1–glutamine 93 and phenylalanine 136–leucine 168. Composition is skewed to acidic residues over residues tyrosine 15–glutamate 37 and serine 45–lysine 78. Residues alanine 79 to glutamine 93 are compositionally biased toward basic and acidic residues. The span at lysine 146–serine 156 shows a compositional bias: basic residues. Positions isoleucine 206–glutamate 371 constitute a Helicase ATP-binding domain. Aspartate 219–threonine 226 lines the ATP pocket. Residues aspartate 322–histidine 325 carry the DEAH box motif. Residues leucine 499–alanine 650 form the Helicase C-terminal domain. SANT domains follow at residues glutamate 845–lysine 897 and glutamine 946–isoleucine 1007. The tract at residues glutamate 1016–lysine 1069 is disordered. Positions lysine 1032–serine 1051 are enriched in polar residues. Residues leucine 1059–lysine 1069 show a composition bias toward basic and acidic residues.

The protein belongs to the SNF2/RAD54 helicase family. ISWI subfamily. As to quaternary structure, interacts with RLT1. Binds to FGT1. Highly expressed in growing tissues such as inflorescence and flower meristems, young leaves and floral organs. Expressed in roots, rosette and cauline leaves, stems, flowers, inflorescences and siliques.

It is found in the nucleus. Possesses intrinsic ATP-dependent nucleosome-remodeling activity. Constitutes the catalytic subunit of several complexes capable of forming ordered nucleosome arrays on chromatin. Involved in the formation of nucleosome distribution patterns. Required for the maintenance of the plant vegetative phase. In association with RLT1 or RLT2 may prevent the early activation of the vegetative-to-reproductive transition by regulating key genes that contribute to flower timing, such as FT, SEP1, SEP3, AGL8/FUL, SOC1 and FLC. Necessary to acquire heat stress (HS) memory. This chain is ISWI chromatin-remodeling complex ATPase CHR17, found in Arabidopsis thaliana (Mouse-ear cress).